The sequence spans 932 residues: Isoleucine--tRNA ligase (932 aa).

A 'HIGH' region motif is present at residues 58–68 (PYANGNLHLGH). Glutamate 567 serves as a coordination point for L-isoleucyl-5'-AMP. Residues 608 to 612 (KMSKS) carry the 'KMSKS' region motif. Lysine 611 is a binding site for ATP. Zn(2+) is bound by residues cysteine 895, cysteine 898, cysteine 915, and cysteine 918.

The protein belongs to the class-I aminoacyl-tRNA synthetase family. IleS type 1 subfamily. As to quaternary structure, monomer. Zn(2+) serves as cofactor.

The protein resides in the cytoplasm. The catalysed reaction is tRNA(Ile) + L-isoleucine + ATP = L-isoleucyl-tRNA(Ile) + AMP + diphosphate. Its function is as follows. Catalyzes the attachment of isoleucine to tRNA(Ile). As IleRS can inadvertently accommodate and process structurally similar amino acids such as valine, to avoid such errors it has two additional distinct tRNA(Ile)-dependent editing activities. One activity is designated as 'pretransfer' editing and involves the hydrolysis of activated Val-AMP. The other activity is designated 'posttransfer' editing and involves deacylation of mischarged Val-tRNA(Ile). This is Isoleucine--tRNA ligase from Azoarcus sp. (strain BH72).